We begin with the raw amino-acid sequence, 217 residues long: 3-demethoxyubiquinol 3-hydroxylase (217 aa).

Positions 66, 96, 99, 148, 180, and 183 each coordinate Fe cation.

The protein belongs to the COQ7 family. Fe cation is required as a cofactor.

It localises to the cell membrane. The enzyme catalyses a 5-methoxy-2-methyl-3-(all-trans-polyprenyl)benzene-1,4-diol + AH2 + O2 = a 3-demethylubiquinol + A + H2O. Its pathway is cofactor biosynthesis; ubiquinone biosynthesis. Its function is as follows. Catalyzes the hydroxylation of 2-nonaprenyl-3-methyl-6-methoxy-1,4-benzoquinol during ubiquinone biosynthesis. The polypeptide is 3-demethoxyubiquinol 3-hydroxylase (Xylella fastidiosa (strain Temecula1 / ATCC 700964)).